The primary structure comprises 178 residues: Cytochrome b6-f complex iron-sulfur subunit (178 aa).

Residues 20–42 (LLTFGTATGVALGALYPVANYFM) traverse the membrane as a helical segment. The region spanning 65–161 (KTGWLASHQA…VDVDDDAVLV (97 aa)) is the Rieske domain. Cysteine 107, histidine 109, cysteine 125, and histidine 128 together coordinate [2Fe-2S] cluster. A disulfide bridge connects residues cysteine 112 and cysteine 127.

Belongs to the Rieske iron-sulfur protein family. In terms of assembly, the 4 large subunits of the cytochrome b6-f complex are cytochrome b6, subunit IV (17 kDa polypeptide, PetD), cytochrome f and the Rieske protein, while the 4 small subunits are PetG, PetL, PetM and PetN. The complex functions as a dimer. [2Fe-2S] cluster is required as a cofactor.

It localises to the cellular thylakoid membrane. It catalyses the reaction 2 oxidized [plastocyanin] + a plastoquinol + 2 H(+)(in) = 2 reduced [plastocyanin] + a plastoquinone + 4 H(+)(out). Functionally, component of the cytochrome b6-f complex, which mediates electron transfer between photosystem II (PSII) and photosystem I (PSI), cyclic electron flow around PSI, and state transitions. In Prochlorococcus marinus subsp. pastoris (strain CCMP1986 / NIES-2087 / MED4), this protein is Cytochrome b6-f complex iron-sulfur subunit.